Reading from the N-terminus, the 29-residue chain is Circulin-F (29 aa).

The cyclopeptide (Ala-Arg) cross-link spans 1–29; the sequence is AIPCGESCVWIPCISAAIGCSCKNKVCYR. Disulfide bonds link Cys4/Cys20, Cys8/Cys22, and Cys13/Cys27.

Post-translationally, this is a cyclic peptide.

Probably participates in a plant defense mechanism. Inhibits the cytopathic effects of the human immunodeficiency virus. The protein is Circulin-F of Chassalia parviflora.